A 99-amino-acid polypeptide reads, in one-letter code: Aspartyl/glutamyl-tRNA(Asn/Gln) amidotransferase subunit C (99 aa).

The protein belongs to the GatC family. In terms of assembly, heterotrimer of A, B and C subunits.

The enzyme catalyses L-glutamyl-tRNA(Gln) + L-glutamine + ATP + H2O = L-glutaminyl-tRNA(Gln) + L-glutamate + ADP + phosphate + H(+). It catalyses the reaction L-aspartyl-tRNA(Asn) + L-glutamine + ATP + H2O = L-asparaginyl-tRNA(Asn) + L-glutamate + ADP + phosphate + 2 H(+). Allows the formation of correctly charged Asn-tRNA(Asn) or Gln-tRNA(Gln) through the transamidation of misacylated Asp-tRNA(Asn) or Glu-tRNA(Gln) in organisms which lack either or both of asparaginyl-tRNA or glutaminyl-tRNA synthetases. The reaction takes place in the presence of glutamine and ATP through an activated phospho-Asp-tRNA(Asn) or phospho-Glu-tRNA(Gln). This Rhodococcus erythropolis (strain PR4 / NBRC 100887) protein is Aspartyl/glutamyl-tRNA(Asn/Gln) amidotransferase subunit C.